A 227-amino-acid polypeptide reads, in one-letter code: Transmembrane emp24 domain-containing protein 4 (227 aa).

The first 29 residues, 1–29 (MAGVGAGPLRAMGRQALLLLALCATGAQG), serve as a signal peptide directing secretion. The Lumenal portion of the chain corresponds to 30-194 (LYFHIGETEK…RLTSESTNQR (165 aa)). A GOLD domain is found at 39-137 (KRCFIEEIPD…KLRVHLDIQV (99 aa)). Asparagine 117 carries N-linked (GlcNAc...) asparagine glycosylation. A coiled-coil region spans residues 147–176 (IAAKDKLTELQLRARQLLDQVEQIQKEQDY). A helical membrane pass occupies residues 195-212 (VLWWSIAQTVILILTGIW). At 213-227 (QMRHLKSFFEAKKLV) the chain is on the cytoplasmic side. Residues 220 to 221 (FF) carry the COPII vesicle coat-binding motif. The COPI vesicle coat-binding motif lies at 220-227 (FFEAKKLV).

It belongs to the EMP24/GP25L family.

The protein resides in the endoplasmic reticulum membrane. Functionally, involved in vesicular protein trafficking, mainly in the early secretory pathway. targeting. Involved in the maintenance of the Golgi apparatus. Appears to play a role in the biosynthesis of secreted cargo including processing. Involved in endoplasmic reticulum stress response. May play a role in the regulation of heat-shock response and apoptosis. This chain is Transmembrane emp24 domain-containing protein 4 (TMED4), found in Homo sapiens (Human).